The chain runs to 524 residues: 2-isopropylmalate synthase (524 aa).

The Pyruvate carboxyltransferase domain occupies 5-267 (VIIFDTTLRD…HTNIRHSEIH (263 aa)). The Mn(2+) site is built by Asp-14, His-202, His-204, and Asn-238. The tract at residues 392–524 (KLEYLGVQSG…KTDKINTESV (133 aa)) is regulatory domain.

This sequence belongs to the alpha-IPM synthase/homocitrate synthase family. LeuA type 1 subfamily. Homodimer. Mn(2+) serves as cofactor.

It localises to the cytoplasm. It carries out the reaction 3-methyl-2-oxobutanoate + acetyl-CoA + H2O = (2S)-2-isopropylmalate + CoA + H(+). It functions in the pathway amino-acid biosynthesis; L-leucine biosynthesis; L-leucine from 3-methyl-2-oxobutanoate: step 1/4. Its function is as follows. Catalyzes the condensation of the acetyl group of acetyl-CoA with 3-methyl-2-oxobutanoate (2-ketoisovalerate) to form 3-carboxy-3-hydroxy-4-methylpentanoate (2-isopropylmalate). This Aeromonas salmonicida (strain A449) protein is 2-isopropylmalate synthase.